A 125-amino-acid chain; its full sequence is Holo-[acyl-carrier-protein] synthase (125 aa).

Mg(2+)-binding residues include glutamate 9 and glutamine 58.

Belongs to the P-Pant transferase superfamily. AcpS family. Mg(2+) serves as cofactor.

The protein resides in the cytoplasm. It catalyses the reaction apo-[ACP] + CoA = holo-[ACP] + adenosine 3',5'-bisphosphate + H(+). Its function is as follows. Transfers the 4'-phosphopantetheine moiety from coenzyme A to a Ser of acyl-carrier-protein. The protein is Holo-[acyl-carrier-protein] synthase of Rhodopirellula baltica (strain DSM 10527 / NCIMB 13988 / SH1).